Here is a 424-residue protein sequence, read N- to C-terminus: D-inositol 3-phosphate glycosyltransferase (424 aa).

H20 contributes to the 1D-myo-inositol 3-phosphate binding site. Residues 26-27 (QP) and G34 contribute to the UDP-N-acetyl-alpha-D-glucosamine site. 1D-myo-inositol 3-phosphate is bound by residues 31–36 (DAGGMN), K89, Y122, T146, and R166. UDP-N-acetyl-alpha-D-glucosamine contacts are provided by R240, K245, and M306. Residues Y315, R316, and A318 each coordinate Mg(2+). Residues E328 and E336 each coordinate UDP-N-acetyl-alpha-D-glucosamine. T342 is a binding site for Mg(2+).

The protein belongs to the glycosyltransferase group 1 family. MshA subfamily. Homodimer.

The catalysed reaction is 1D-myo-inositol 3-phosphate + UDP-N-acetyl-alpha-D-glucosamine = 1D-myo-inositol 2-acetamido-2-deoxy-alpha-D-glucopyranoside 3-phosphate + UDP + H(+). In terms of biological role, catalyzes the transfer of a N-acetyl-glucosamine moiety to 1D-myo-inositol 3-phosphate to produce 1D-myo-inositol 2-acetamido-2-deoxy-glucopyranoside 3-phosphate in the mycothiol biosynthesis pathway. The chain is D-inositol 3-phosphate glycosyltransferase from Kribbella flavida (strain DSM 17836 / JCM 10339 / NBRC 14399).